The sequence spans 427 residues: UBX domain-containing protein 2 (427 aa).

2 disordered regions span residues 115-143 (FDQS…SRAS) and 273-331 (ETSG…GVAD). A compositionally biased stretch (low complexity) spans 311-326 (STTESQGESSSQQAES). The UBX domain occupies 349 to 425 (PGPNVTRIQI…GIQNTALQFE (77 aa)). Phosphoserine is present on S371.

Interacts with cdc48.

In terms of biological role, involved in CDC48-dependent protein degradation through the ubiquitin/proteasome pathway. The sequence is that of UBX domain-containing protein 2 (ubx2) from Schizosaccharomyces pombe (strain 972 / ATCC 24843) (Fission yeast).